The sequence spans 331 residues: Anthranilate phosphoribosyltransferase (331 aa).

Residues Gly78, 81–82 (GD), Thr86, 88–91 (NVST), 106–114 (KHGNYSVSS), and Ser118 contribute to the 5-phospho-alpha-D-ribose 1-diphosphate site. Residue Gly78 coordinates anthranilate. Ser90 lines the Mg(2+) pocket. Asn109 serves as a coordination point for anthranilate. Arg164 contacts anthranilate. 2 residues coordinate Mg(2+): Asp222 and Glu223.

Belongs to the anthranilate phosphoribosyltransferase family. Homodimer. Mg(2+) is required as a cofactor.

It carries out the reaction N-(5-phospho-beta-D-ribosyl)anthranilate + diphosphate = 5-phospho-alpha-D-ribose 1-diphosphate + anthranilate. The protein operates within amino-acid biosynthesis; L-tryptophan biosynthesis; L-tryptophan from chorismate: step 2/5. Catalyzes the transfer of the phosphoribosyl group of 5-phosphorylribose-1-pyrophosphate (PRPP) to anthranilate to yield N-(5'-phosphoribosyl)-anthranilate (PRA). This Haloarcula marismortui (strain ATCC 43049 / DSM 3752 / JCM 8966 / VKM B-1809) (Halobacterium marismortui) protein is Anthranilate phosphoribosyltransferase.